Consider the following 187-residue polypeptide: Large ribosomal subunit protein eL18x (187 aa).

The disordered stretch occupies residues 150 to 187 (HFGPAPGVPHSNTKPYVRHKGRKFEKARGKRKSRGFKV). The segment covering 165–187 (YVRHKGRKFEKARGKRKSRGFKV) has biased composition (basic residues).

Belongs to the eukaryotic ribosomal protein eL18 family.

This chain is Large ribosomal subunit protein eL18x (RPL18C), found in Arabidopsis thaliana (Mouse-ear cress).